The following is a 102-amino-acid chain: Small ribosomal subunit protein bS18c (102 aa).

The protein belongs to the bacterial ribosomal protein bS18 family. In terms of assembly, part of the 30S ribosomal subunit.

It localises to the plastid. The protein resides in the chloroplast. The protein is Small ribosomal subunit protein bS18c of Phaseolus vulgaris (Kidney bean).